Reading from the N-terminus, the 200-residue chain is Peroxiredoxin (200 aa).

One can recognise a Thioredoxin domain in the interval 6 to 165 (AQIGKPAPEF…TLRLVQAFQH (160 aa)). The active-site Cysteine sulfenic acid (-SOH) intermediate is the C52.

This sequence belongs to the peroxiredoxin family. AhpC/Prx1 subfamily. As to quaternary structure, homodimer; disulfide-linked, upon oxidation.

It catalyses the reaction a hydroperoxide + [thioredoxin]-dithiol = an alcohol + [thioredoxin]-disulfide + H2O. In terms of biological role, thiol-specific peroxidase that catalyzes the reduction of hydrogen peroxide and organic hydroperoxides to water and alcohols, respectively. Plays a role in cell protection against oxidative stress by detoxifying peroxides and as sensor of hydrogen peroxide-mediated signaling events. This is Peroxiredoxin from Cynops pyrrhogaster (Japanese fire-bellied newt).